The sequence spans 207 residues: Small ribosomal subunit protein uS4 (207 aa).

A disordered region spans residues 31-53; it reads KAKFDSKPGQHGRTSGARTSDFG. The S4 RNA-binding domain occupies 97–160; the sequence is SRLDNVVYRM…KKQNRIVEAL (64 aa).

Belongs to the universal ribosomal protein uS4 family. In terms of assembly, part of the 30S ribosomal subunit. Contacts protein S5. The interaction surface between S4 and S5 is involved in control of translational fidelity.

Its function is as follows. One of the primary rRNA binding proteins, it binds directly to 16S rRNA where it nucleates assembly of the body of the 30S subunit. Functionally, with S5 and S12 plays an important role in translational accuracy. In Albidiferax ferrireducens (strain ATCC BAA-621 / DSM 15236 / T118) (Rhodoferax ferrireducens), this protein is Small ribosomal subunit protein uS4.